Here is a 483-residue protein sequence, read N- to C-terminus: Beta-glucosidase 4 (483 aa).

Residues Gln-29, His-131, 176–177 (NE), Tyr-310, and Glu-380 each bind a beta-D-glucoside. The Proton donor role is filled by Glu-177. The active-site Nucleophile is the Glu-380. Residue Asn-398 is glycosylated (N-linked (GlcNAc...) asparagine). Residues Trp-429, 436–437 (EW), and Phe-445 contribute to the a beta-D-glucoside site.

It belongs to the glycosyl hydrolase 1 family.

The catalysed reaction is Hydrolysis of terminal, non-reducing beta-D-glucosyl residues with release of beta-D-glucose.. This chain is Beta-glucosidase 4 (BGLU4), found in Oryza sativa subsp. japonica (Rice).